We begin with the raw amino-acid sequence, 181 residues long: Isopentenyl-diphosphate Delta-isomerase (181 aa).

Residues histidine 25 and histidine 32 each coordinate Mn(2+). A Nudix hydrolase domain is found at 30-164 (PLHLAFSCWL…PWAFSPWMVM (135 aa)). Cysteine 67 is a catalytic residue. Cysteine 67 provides a ligand contact to Mg(2+). Residue histidine 69 coordinates Mn(2+). Residue glutamate 87 coordinates Mg(2+). Residues glutamate 114 and glutamate 116 each coordinate Mn(2+). Glutamate 116 is an active-site residue.

The protein belongs to the IPP isomerase type 1 family. As to quaternary structure, homodimer. Requires Mg(2+) as cofactor. It depends on Mn(2+) as a cofactor.

The protein localises to the cytoplasm. The catalysed reaction is isopentenyl diphosphate = dimethylallyl diphosphate. The protein operates within isoprenoid biosynthesis; dimethylallyl diphosphate biosynthesis; dimethylallyl diphosphate from isopentenyl diphosphate: step 1/1. Its function is as follows. Catalyzes the 1,3-allylic rearrangement of the homoallylic substrate isopentenyl (IPP) to its highly electrophilic allylic isomer, dimethylallyl diphosphate (DMAPP). This Salmonella choleraesuis (strain SC-B67) protein is Isopentenyl-diphosphate Delta-isomerase.